The following is a 119-amino-acid chain: Holo-[acyl-carrier-protein] synthase (119 aa).

Positions 8 and 50 each coordinate Mg(2+).

It belongs to the P-Pant transferase superfamily. AcpS family. Requires Mg(2+) as cofactor.

The protein localises to the cytoplasm. It carries out the reaction apo-[ACP] + CoA = holo-[ACP] + adenosine 3',5'-bisphosphate + H(+). Its function is as follows. Transfers the 4'-phosphopantetheine moiety from coenzyme A to a Ser of acyl-carrier-protein. The polypeptide is Holo-[acyl-carrier-protein] synthase (Clavibacter michiganensis subsp. michiganensis (strain NCPPB 382)).